A 185-amino-acid polypeptide reads, in one-letter code: Protein FAM219A (185 aa).

Met1 bears the N-acetylmethionine mark. A disordered region spans residues 1–131 (MMEEIDRFQV…SRYSSSGYSS (131 aa)). At Ser47 the chain carries Phosphoserine. The span at 52-61 (KLEKQRELAR) shows a compositional bias: basic and acidic residues. Residues 66-80 (KNGSMGSPVNQQPKK) are compositionally biased toward polar residues. A phosphoserine mark is found at Ser72 and Ser102. Thr113 carries the phosphothreonine modification. Phosphoserine occurs at positions 115 and 122. Residues 122–131 (SRYSSSGYSS) show a composition bias toward low complexity.

This sequence belongs to the FAM219 family.

The polypeptide is Protein FAM219A (FAM219A) (Homo sapiens (Human)).